Consider the following 200-residue polypeptide: Imidazoleglycerol-phosphate dehydratase (200 aa).

This sequence belongs to the imidazoleglycerol-phosphate dehydratase family.

The protein localises to the cytoplasm. The enzyme catalyses D-erythro-1-(imidazol-4-yl)glycerol 3-phosphate = 3-(imidazol-4-yl)-2-oxopropyl phosphate + H2O. It functions in the pathway amino-acid biosynthesis; L-histidine biosynthesis; L-histidine from 5-phospho-alpha-D-ribose 1-diphosphate: step 6/9. This chain is Imidazoleglycerol-phosphate dehydratase, found in Chlorobium phaeobacteroides (strain BS1).